We begin with the raw amino-acid sequence, 311 residues long: N-acetylmuramic acid 6-phosphate etherase (311 aa).

Positions 64-227 constitute an SIS domain; the sequence is IYQRLIDNGR…SSGVMIKLGK (164 aa). Catalysis depends on Glu-92, which acts as the Proton donor. The active site involves Glu-123.

It belongs to the GCKR-like family. MurNAc-6-P etherase subfamily. As to quaternary structure, homodimer.

It catalyses the reaction N-acetyl-D-muramate 6-phosphate + H2O = N-acetyl-D-glucosamine 6-phosphate + (R)-lactate. Its pathway is amino-sugar metabolism; N-acetylmuramate degradation. Its function is as follows. Specifically catalyzes the cleavage of the D-lactyl ether substituent of MurNAc 6-phosphate, producing GlcNAc 6-phosphate and D-lactate. This is N-acetylmuramic acid 6-phosphate etherase from Prochlorococcus marinus (strain SARG / CCMP1375 / SS120).